We begin with the raw amino-acid sequence, 524 residues long: RNA-splicing ligase RtcB homolog 1 (524 aa).

Residues Asp141, Cys144, His249, His281, and His372 each contribute to the Mn(2+) site. GMP is bound at residue 248–252 (NHYLE). GMP contacts are provided by residues 372 to 373 (HN), 421 to 424 (GGSM), Ser428, 447 to 450 (HGAG), and Lys523. His447 functions as the GMP-histidine intermediate in the catalytic mechanism.

It belongs to the RtcB family. As to quaternary structure, catalytic component of the tRNA-splicing ligase complex. Mn(2+) is required as a cofactor.

It catalyses the reaction a 3'-end 3'-phospho-ribonucleotide-RNA + a 5'-end dephospho-ribonucleoside-RNA + GTP = a ribonucleotidyl-ribonucleotide-RNA + GMP + diphosphate. The catalysed reaction is a 3'-end 2',3'-cyclophospho-ribonucleotide-RNA + a 5'-end dephospho-ribonucleoside-RNA + GTP + H2O = a ribonucleotidyl-ribonucleotide-RNA + GMP + diphosphate + H(+). Catalytic subunit of the tRNA-splicing ligase complex that acts by directly joining spliced tRNA halves to mature-sized tRNAs by incorporating the precursor-derived splice junction phosphate into the mature tRNA as a canonical 3',5'-phosphodiester. May act as an RNA ligase with broad substrate specificity, and may function toward other RNAs. The chain is RNA-splicing ligase RtcB homolog 1 from Entamoeba histolytica (strain ATCC 30459 / HM-1:IMSS / ABRM).